A 627-amino-acid chain; its full sequence is Coiled-coil domain-containing protein 22 (627 aa).

The tract at residues 1 to 321 (MEEADRILIH…VADVPATSQR (321 aa)) is sufficient for interaction with COMMD1. The sufficicient and required for interaction with CCDC93 stretch occupies residues 1 to 447 (MEEADRILIH…LQDCRELESS (447 aa)). S410 carries the phosphoserine modification. Residues 448–535 (RRLAEIQELH…NSLSGKLDRT (88 aa)) are a coiled coil.

It belongs to the CCDC22 family. In terms of assembly, component of the commander complex consisting of the CCC subcomplex and the retriever subcomplex. Component of the CCC (COMMD/CCDC22/CCDC93) subcomplex consisting of COMMD1, COMMD2, COMMD3, COMMD4, COMMD5, COMMD6, COMMD7, COMMD8, COMMD9, COMMD10, CCDC22 and CCDC93. Forms a coiled-coil heterodimer with CCDC22; this heterodimer interacts with the guanine nucleotide exchange factor DENND10; the interaction is direct. Interacts with CUL1, CUL2, CUL3, SKP1, BTRC. Interacts with SNX17 and SNX31. Interacts with CPNE1 and CPNE4.

It is found in the endosome. The protein resides in the cytoplasm. It localises to the cytoskeleton. The protein localises to the microtubule organizing center. Its subcellular location is the centrosome. Functionally, component of the commander complex that is essential for endosomal recycling of transmembrane cargos; the Commander complex is composed of composed of the CCC subcomplex and the retriever subcomplex. Component of the CCC complex, which is involved in the regulation of endosomal recycling of surface proteins, including integrins, signaling receptor and channels. Involved in regulation of NF-kappa-B signaling. Promotes ubiquitination of I-kappa-B-kinase subunit IKBKB and its subsequent proteasomal degradation leading to NF-kappa-B activation; the function may involve association with COMMD8 and a CUL1-dependent E3 ubiquitin ligase complex. May down-regulate NF-kappa-B activity via association with COMMD1 and involving a CUL2-dependent E3 ubiquitin ligase complex. Regulates the cellular localization of COMM domain-containing proteins, such as COMMD1 and COMMD10. Component of the CCC complex, which is involved in the regulation of endosomal recycling of surface proteins, including integrins, signaling receptor and channels. The CCC complex associates with SNX17, retriever and WASH complexes to prevent lysosomal degradation and promote cell surface recycling of numerous cargos such as integrins ITGA5:ITGB1. Plays a role in copper ion homeostasis. Involved in copper-dependent ATP7A trafficking between the trans-Golgi network and vesicles in the cell periphery; the function is proposed to depend on its association within the CCC complex and cooperation with the WASH complex on early endosomes. The polypeptide is Coiled-coil domain-containing protein 22 (Ccdc22) (Mus musculus (Mouse)).